The primary structure comprises 358 residues: MPNPGSTSSPGSIPEEIRNLLADVETFVADTLKGENLSKKAKEKRDSLIKKIKDVKSVYPQEFQDKGDAEEGDEYDDPFAGPPDTISLASERYDKDDDGPSDGNQFPPIAAQDLSFVIKAGYLEKRRKDHSFLGFEWQKRWCALSKTVFYYYGSDKDKQQKGEFAIEGYDVRMNNTLRKDAKKDCCFEICAPDKRIYQFTAASPKDAEEWVQQLKFILQDMGSDVIPEDEDEKGDLYDDVDHPVPVSSPQRSQPIDDEIYEELPEEEEDTASVKMDEQGKGSRDSVQHPSGDKSTDYANFYQGLWDCTGSLSDELSFKRGDVIYILSKEYNRYGWWVGEMQGAIGLVPKAYLMEMYDI.

S6 and S9 each carry phosphoserine. Positions 60 to 108 (PQEFQDKGDAEEGDEYDDPFAGPPDTISLASERYDKDDDGPSDGNQFPP) are disordered. Y75 carries the phosphotyrosine modification. 2 positions are modified to phosphoserine: S87 and S90. A PH domain is found at 116 to 219 (FVIKAGYLEK…WVQQLKFILQ (104 aa)). 2 positions are modified to phosphotyrosine: Y151 and Y197. S223 is subject to Phosphoserine. A disordered region spans residues 227–293 (PEDEDEKGDL…DSVQHPSGDK (67 aa)). Positions 243 to 253 (PVPVSSPQRSQ) are enriched in low complexity. The span at 255–270 (IDDEIYEELPEEEEDT) shows a compositional bias: acidic residues. Position 260 is a phosphotyrosine (Y260). Phosphoserine occurs at positions 272, 282, and 285. Residues 274–293 (KMDEQGKGSRDSVQHPSGDK) are compositionally biased toward basic and acidic residues. The SH3 domain occupies 296–357 (DYANFYQGLW…PKAYLMEMYD (62 aa)).

The protein belongs to the SKAP family. In terms of assembly, interacts with FYB1, which is required for SKAP2 protein stability. Interacts with PTPNS1. Part of a complex consisting of SKAP2, FYB1 and PTPNS1. Part of a complex consisting of SKAP2, FYB1 and LILRB3. Interacts with LAT, GRB2, PTK2B, and PRAM1. May interact with actin. May interact with FYN, HCK and LYN. Interacts with FASLG.

Its subcellular location is the cytoplasm. May be involved in B-cell and macrophage adhesion processes. In B-cells, may act by coupling the B-cell receptor (BCR) to integrin activation. May play a role in src signaling pathway. The chain is Src kinase-associated phosphoprotein 2 (Skap2) from Rattus norvegicus (Rat).